The primary structure comprises 287 residues: Mitochondrial dicarboxylate carrier (287 aa).

Solcar repeat units follow at residues 8-88 (SRWY…VRDR), 101-188 (EKVL…AKQL), and 197-280 (DNIF…LRKN). 6 helical membrane passes run 10–30 (WYFGGLASCGAACCTHPLDLL), 63–82 (GLSASLCRQMTYSLTRFAIY), 103–123 (VLLGSVSGLAGGFVGTPADLV), 163–182 (GATMASSRGALVTVGQLSCY), 203–223 (FVASFIAGGCATFLCQPLDVL), and 255–275 (GLVPAGIRLIPHTVLTFVFLE).

Belongs to the mitochondrial carrier (TC 2.A.29) family. Present in high amounts in liver and kidney, and at lower levels in all the other tissues analyzed.

Its subcellular location is the mitochondrion inner membrane. The catalysed reaction is (S)-malate(in) + phosphate(out) = (S)-malate(out) + phosphate(in). The enzyme catalyses malonate(out) + (S)-malate(in) = malonate(in) + (S)-malate(out). It catalyses the reaction (S)-malate(in) + succinate(out) = (S)-malate(out) + succinate(in). It carries out the reaction (S)-malate(in) + sulfate(out) = (S)-malate(out) + sulfate(in). The catalysed reaction is malonate(out) + phosphate(in) = malonate(in) + phosphate(out). The enzyme catalyses succinate(out) + phosphate(in) = succinate(in) + phosphate(out). It catalyses the reaction sulfate(out) + phosphate(in) = sulfate(in) + phosphate(out). It carries out the reaction malonate(out) + succinate(in) = malonate(in) + succinate(out). Its function is as follows. Catalyzes the electroneutral exchange or flux of physiologically important metabolites such as dicarboxylates (malonate, malate, succinate), inorganic sulfur-containing anions, and phosphate, across mitochondrial inner membrane. Plays an important role in gluconeogenesis, fatty acid metabolism, urea synthesis, and sulfur metabolism, particularly in liver, by supplying the substrates for the different metabolic processes. Regulates fatty acid release from adipocytes, and contributes to systemic insulin sensitivity. The protein is Mitochondrial dicarboxylate carrier (SLC25A10) of Homo sapiens (Human).